Consider the following 443-residue polypeptide: ATP-dependent protease ATPase subunit HslU (443 aa).

Residues isoleucine 18, glycine 60–glutamate 65, aspartate 256, glutamate 321, and arginine 393 contribute to the ATP site.

It belongs to the ClpX chaperone family. HslU subfamily. A double ring-shaped homohexamer of HslV is capped on each side by a ring-shaped HslU homohexamer. The assembly of the HslU/HslV complex is dependent on binding of ATP.

The protein resides in the cytoplasm. In terms of biological role, ATPase subunit of a proteasome-like degradation complex; this subunit has chaperone activity. The binding of ATP and its subsequent hydrolysis by HslU are essential for unfolding of protein substrates subsequently hydrolyzed by HslV. HslU recognizes the N-terminal part of its protein substrates and unfolds these before they are guided to HslV for hydrolysis. This chain is ATP-dependent protease ATPase subunit HslU, found in Vibrio parahaemolyticus serotype O3:K6 (strain RIMD 2210633).